We begin with the raw amino-acid sequence, 216 residues long: FMN-dependent NADH:quinone oxidoreductase 2 (216 aa).

Residues Ser-9, 15–17 (SVS), 96–99 (MYNF), and 140–143 (SRGG) contribute to the FMN site.

The protein belongs to the azoreductase type 1 family. Homodimer. It depends on FMN as a cofactor.

It catalyses the reaction 2 a quinone + NADH + H(+) = 2 a 1,4-benzosemiquinone + NAD(+). It carries out the reaction N,N-dimethyl-1,4-phenylenediamine + anthranilate + 2 NAD(+) = 2-(4-dimethylaminophenyl)diazenylbenzoate + 2 NADH + 2 H(+). Functionally, quinone reductase that provides resistance to thiol-specific stress caused by electrophilic quinones. Also exhibits azoreductase activity. Catalyzes the reductive cleavage of the azo bond in aromatic azo compounds to the corresponding amines. This chain is FMN-dependent NADH:quinone oxidoreductase 2, found in Xanthomonas axonopodis pv. citri (strain 306).